We begin with the raw amino-acid sequence, 386 residues long: Homogentisate solanesyltransferase, chloroplastic (386 aa).

Residues 1–69 (MELSISQSPR…STNYRKISIR (69 aa)) constitute a chloroplast transit peptide. Transmembrane regions (helical) follow at residues 130–150 (VLKALSGLLALICGNGYIVGI), 181–201 (LVIFFAIAGLLVVGFNFGPFI), 204–220 (LYSLGLFLGTIYSVPPL), 225–245 (FPVAAFLIIATVRGFLLNFGV), 259–279 (WSAPVAFITSFVTLFALVIAI), 306–326 (IAFLGSGLLLVNYVSAISLAF), 335–355 (SLMIPAHVILASGLIFQTWVL), and 365–385 (ISGYYRFIWNLFYAEYLLFPF).

This sequence belongs to the UbiA prenyltransferase family.

It localises to the plastid. It is found in the chloroplast membrane. The enzyme catalyses all-trans-nonaprenyl diphosphate + homogentisate + H(+) = 2-methyl-6-(all-trans-nonaprenyl)benzene-1,4-diol + CO2 + diphosphate. Inhibited by haloxydine (3,5-dichloro-2,6-difluoro-4-haloxypyridine). In terms of biological role, involved in the synthesis of plastoquinone-9. Can use both homogentisic acid and 2,5-dihydroxyphenylacetic acid gamma-lactone as prenyl acceptors, and solanesyl diphosphate &gt; farnesyl diphosphate &gt; geranylgeranyl diphosphate &gt;&gt; phytyl diphosphate as prenyl donors. Do not catalyze the decardoxylation of homogentisate uncoupled from prenylation. This Arabidopsis thaliana (Mouse-ear cress) protein is Homogentisate solanesyltransferase, chloroplastic (HST).